We begin with the raw amino-acid sequence, 371 residues long: Hsc70-interacting protein (371 aa).

The tract at residues 38-80 is disordered; sequence MGGKVPPATHKAKSEENTKEEKRDKTTEENIKTEELSSEESDL. A compositionally biased stretch (basic and acidic residues) spans 49–72; the sequence is AKSEENTKEEKRDKTTEENIKTEE. 3 TPR repeats span residues 113-146, 147-180, and 181-214; these read ANEK…NPRL, AILY…NPDS, and AQPY…DYDE. Residues 255–271 show a composition bias toward basic and acidic residues; it reads KAREEHERAQREEEARR. A disordered region spans residues 255-296; that stretch reads KAREEHERAQREEEARRQSGSQYGSFPGGFPGGMPGNFPGGM. Residues 280–296 show a composition bias toward gly residues; it reads FPGGFPGGMPGNFPGGM. The STI1 domain maps to 321–360; that stretch reads DPEVLAAMQDPEVMVAFQDVAQNPSNMSKYQSNPKVMNLI. The residue at position 348 (S348) is a Phosphoserine; by GRK5. 2 positions are modified to N6-acetyllysine: K355 and K362.

Belongs to the FAM10 family. As to quaternary structure, homotetramer. Interacts with HSC70 as well as DNAJ homologs and HSP90. Interacts (via the C-terminus 302- 318 AA) with GRK5.

It localises to the cytoplasm. One HIP oligomer binds the ATPase domains of at least two HSC70 molecules dependent on activation of the HSC70 ATPase by HSP40. Stabilizes the ADP state of HSC70 that has a high affinity for substrate protein. Through its own chaperone activity, it may contribute to the interaction of HSC70 with various target proteins. The chain is Hsc70-interacting protein (St13) from Mus musculus (Mouse).